Reading from the N-terminus, the 559-residue chain is Acetolactate synthase, catabolic (559 aa).

Residues arginine 159, 263–284 (FNNQ…IGYS), and 304–323 (DVLP…LVGD) each bind FAD. Position 447 (aspartate 447) interacts with Mg(2+).

It belongs to the TPP enzyme family. In terms of assembly, homodimer.

The catalysed reaction is 2 pyruvate + H(+) = (2S)-2-acetolactate + CO2. The protein operates within polyol metabolism; (R,R)-butane-2,3-diol biosynthesis; (R,R)-butane-2,3-diol from pyruvate: step 1/3. This Raoultella terrigena (Klebsiella terrigena) protein is Acetolactate synthase, catabolic (budB).